A 353-amino-acid chain; its full sequence is Photosystem II protein D1 (353 aa).

Threonine 2 carries the post-translational modification N-acetylthreonine. At threonine 2 the chain carries Phosphothreonine. Transmembrane regions (helical) follow at residues 29-46 (YIGWFGVLMIPTLLTATS), 118-133 (HFLLGVACYMGREWEL), and 142-156 (WIAVAYSAPVAAATA). Residue histidine 118 participates in chlorophyll a binding. Residue tyrosine 126 coordinates pheophytin a. The [CaMn4O5] cluster site is built by aspartate 170 and glutamate 189. A helical membrane pass occupies residues 197-218 (FHMLGVAGVFGGSLFSAMHGSL). Histidine 198 is a chlorophyll a binding site. Residues histidine 215 and 264-265 (SF) each bind a quinone. Position 215 (histidine 215) interacts with Fe cation. Histidine 272 serves as a coordination point for Fe cation. Residues 274-288 (FLAAWPVVGIWFTAL) traverse the membrane as a helical segment. Residues histidine 332, glutamate 333, aspartate 342, and alanine 344 each coordinate [CaMn4O5] cluster. A propeptide spanning residues 345 to 353 (ALEVPSLNG) is cleaved from the precursor.

The protein belongs to the reaction center PufL/M/PsbA/D family. PSII is composed of 1 copy each of membrane proteins PsbA, PsbB, PsbC, PsbD, PsbE, PsbF, PsbH, PsbI, PsbJ, PsbK, PsbL, PsbM, PsbT, PsbX, PsbY, PsbZ, Psb30/Ycf12, at least 3 peripheral proteins of the oxygen-evolving complex and a large number of cofactors. It forms dimeric complexes. It depends on The D1/D2 heterodimer binds P680, chlorophylls that are the primary electron donor of PSII, and subsequent electron acceptors. It shares a non-heme iron and each subunit binds pheophytin, quinone, additional chlorophylls, carotenoids and lipids. D1 provides most of the ligands for the Mn4-Ca-O5 cluster of the oxygen-evolving complex (OEC). There is also a Cl(-1) ion associated with D1 and D2, which is required for oxygen evolution. The PSII complex binds additional chlorophylls, carotenoids and specific lipids. as a cofactor. In terms of processing, tyr-161 forms a radical intermediate that is referred to as redox-active TyrZ, YZ or Y-Z. Post-translationally, C-terminally processed by CTPA; processing is essential to allow assembly of the oxygen-evolving complex and thus photosynthetic growth.

The protein resides in the plastid. It is found in the chloroplast thylakoid membrane. The catalysed reaction is 2 a plastoquinone + 4 hnu + 2 H2O = 2 a plastoquinol + O2. Photosystem II (PSII) is a light-driven water:plastoquinone oxidoreductase that uses light energy to abstract electrons from H(2)O, generating O(2) and a proton gradient subsequently used for ATP formation. It consists of a core antenna complex that captures photons, and an electron transfer chain that converts photonic excitation into a charge separation. The D1/D2 (PsbA/PsbD) reaction center heterodimer binds P680, the primary electron donor of PSII as well as several subsequent electron acceptors. The protein is Photosystem II protein D1 of Oryza nivara (Indian wild rice).